A 154-amino-acid chain; its full sequence is Large ribosomal subunit protein uL13 (154 aa).

This sequence belongs to the universal ribosomal protein uL13 family. In terms of assembly, part of the 50S ribosomal subunit.

In terms of biological role, this protein is one of the early assembly proteins of the 50S ribosomal subunit, although it is not seen to bind rRNA by itself. It is important during the early stages of 50S assembly. This is Large ribosomal subunit protein uL13 from Allorhizobium ampelinum (strain ATCC BAA-846 / DSM 112012 / S4) (Agrobacterium vitis (strain S4)).